Consider the following 150-residue polypeptide: Allograft inflammatory factor 1-like (150 aa).

The residue at position 2 (S2) is an N-acetylserine. Phosphoserine is present on S2. The EF-hand 1 domain occupies 47–82; it reads EKLAAFKEKYMEFDLNNEGEIDLMSLKRMMEKLGVP. Residues D60, N62, E64, and E66 each coordinate Ca(2+). The EF-hand 2; degenerate domain occupies 83 to 117; that stretch reads KTHLEMKKMISEVTGGVSDTISYRDFVNMMLGKRS. The disordered stretch occupies residues 129–150; the sequence is KANESSPKPAGPPPERDIASLP. Phosphoserine is present on S134.

As to quaternary structure, homodimer (Potential). Monomer.

It localises to the cytoplasm. Its subcellular location is the cytoskeleton. It is found in the cell projection. The protein resides in the ruffle membrane. Functionally, actin-binding protein that promotes actin bundling. May neither bind calcium nor depend on calcium for function. The chain is Allograft inflammatory factor 1-like (Aif1l) from Mus musculus (Mouse).